A 49-amino-acid polypeptide reads, in one-letter code: Large ribosomal subunit protein bL33 (49 aa).

The protein belongs to the bacterial ribosomal protein bL33 family.

This is Large ribosomal subunit protein bL33 from Lacticaseibacillus casei (strain BL23) (Lactobacillus casei).